Here is a 232-residue protein sequence, read N- to C-terminus: Large ribosomal subunit protein uL1 (232 aa).

The protein belongs to the universal ribosomal protein uL1 family. In terms of assembly, part of the 50S ribosomal subunit.

In terms of biological role, binds directly to 23S rRNA. The L1 stalk is quite mobile in the ribosome, and is involved in E site tRNA release. Functionally, protein L1 is also a translational repressor protein, it controls the translation of the L11 operon by binding to its mRNA. In Syntrophus aciditrophicus (strain SB), this protein is Large ribosomal subunit protein uL1.